Reading from the N-terminus, the 126-residue chain is Large ribosomal subunit protein eL32 (126 aa).

This sequence belongs to the eukaryotic ribosomal protein eL32 family. Part of the 50S ribosomal subunit.

This Thermococcus kodakarensis (strain ATCC BAA-918 / JCM 12380 / KOD1) (Pyrococcus kodakaraensis (strain KOD1)) protein is Large ribosomal subunit protein eL32 (rpl32e).